The sequence spans 534 residues: CTP synthase (534 aa).

Residues 1–268 are amidoligase domain; the sequence is MAAKYIFVTG…DQIVCDHLQL (268 aa). A CTP-binding site is contributed by Ser-14. A UTP-binding site is contributed by Ser-14. Residue 15 to 20 coordinates ATP; that stretch reads SLGKGI. Tyr-55 is a binding site for L-glutamine. Position 72 (Asp-72) interacts with ATP. Mg(2+)-binding residues include Asp-72 and Glu-142. CTP contacts are provided by residues 149-151, 189-194, and Lys-225; these read DIE and KSKPTQ. UTP-binding positions include 189-194 and Lys-225; that span reads KSKPTQ. The 242-residue stretch at 293 to 534 folds into the Glutamine amidotransferase type-1 domain; the sequence is RIAIVGKYVE…FVRNALAAQA (242 aa). Residue Gly-355 participates in L-glutamine binding. Cys-382 acts as the Nucleophile; for glutamine hydrolysis in catalysis. L-glutamine-binding positions include 383–386, Glu-406, and Arg-463; that span reads LGMQ. Active-site residues include His-508 and Glu-510.

It belongs to the CTP synthase family. In terms of assembly, homotetramer.

The enzyme catalyses UTP + L-glutamine + ATP + H2O = CTP + L-glutamate + ADP + phosphate + 2 H(+). The catalysed reaction is L-glutamine + H2O = L-glutamate + NH4(+). It catalyses the reaction UTP + NH4(+) + ATP = CTP + ADP + phosphate + 2 H(+). It functions in the pathway pyrimidine metabolism; CTP biosynthesis via de novo pathway; CTP from UDP: step 2/2. Allosterically activated by GTP, when glutamine is the substrate; GTP has no effect on the reaction when ammonia is the substrate. The allosteric effector GTP functions by stabilizing the protein conformation that binds the tetrahedral intermediate(s) formed during glutamine hydrolysis. Inhibited by the product CTP, via allosteric rather than competitive inhibition. Catalyzes the ATP-dependent amination of UTP to CTP with either L-glutamine or ammonia as the source of nitrogen. Regulates intracellular CTP levels through interactions with the four ribonucleotide triphosphates. The polypeptide is CTP synthase (Shouchella clausii (strain KSM-K16) (Alkalihalobacillus clausii)).